The sequence spans 382 residues: RNA binding protein fox-1 homolog 1 (382 aa).

Residues Met1–Val121 are disordered. Positions Gln70 to Gly87 are enriched in polar residues. Positions Thr88–Asp99 are enriched in low complexity. Residues Gly100–Lys113 show a composition bias toward polar residues. Residues Lys117–Ala193 enclose the RRM domain. Position 317 is an asymmetric dimethylarginine (Arg317). The tract at residues Met357–Ser382 is disordered.

Binds to the C-terminus of ATXN2.

The protein resides in the nucleus. It localises to the cytoplasm. RNA-binding protein that regulates alternative splicing events by binding to 5'-UGCAUGU-3' elements. Prevents binding of U2AF2 to the 3'-splice site. Regulates alternative splicing of tissue-specific exons and of differentially spliced exons during erythropoiesis. This is RNA binding protein fox-1 homolog 1 (RBFOX1) from Pongo abelii (Sumatran orangutan).